Consider the following 518-residue polypeptide: Serine hydroxymethyltransferase, mitochondrial (518 aa).

Residues 1–31 (MAMAMALRKLSSSVNKSSRPLFSASSLYYKS) constitute a mitochondrion transit peptide. Position 287 is an N6-(pyridoxal phosphate)lysine (Lys-287).

It belongs to the SHMT family. In terms of assembly, homotetramer. The cofactor is pyridoxal 5'-phosphate.

It localises to the mitochondrion. The catalysed reaction is (6R)-5,10-methylene-5,6,7,8-tetrahydrofolate + glycine + H2O = (6S)-5,6,7,8-tetrahydrofolate + L-serine. It functions in the pathway one-carbon metabolism; tetrahydrofolate interconversion. Catalyzes the interconversion of serine and glycine. This chain is Serine hydroxymethyltransferase, mitochondrial, found in Pisum sativum (Garden pea).